The sequence spans 70 residues: MKEGIHPDYHEITAKCSCGHVFVTRSTGKDLNLDVCSECHPFYTGKQKVLDTGGRIDRFKKRFAVLGGKN.

Residues Cys-16, Cys-18, Cys-36, and Cys-39 each coordinate Zn(2+).

This sequence belongs to the bacterial ribosomal protein bL31 family. Type A subfamily. Part of the 50S ribosomal subunit. The cofactor is Zn(2+).

Functionally, binds the 23S rRNA. This Tolumonas auensis (strain DSM 9187 / NBRC 110442 / TA 4) protein is Large ribosomal subunit protein bL31.